A 254-amino-acid polypeptide reads, in one-letter code: 3-deoxy-manno-octulosonate cytidylyltransferase (254 aa).

The protein belongs to the KdsB family.

It is found in the cytoplasm. It carries out the reaction 3-deoxy-alpha-D-manno-oct-2-ulosonate + CTP = CMP-3-deoxy-beta-D-manno-octulosonate + diphosphate. Its pathway is nucleotide-sugar biosynthesis; CMP-3-deoxy-D-manno-octulosonate biosynthesis; CMP-3-deoxy-D-manno-octulosonate from 3-deoxy-D-manno-octulosonate and CTP: step 1/1. It functions in the pathway bacterial outer membrane biogenesis; lipopolysaccharide biosynthesis. In terms of biological role, activates KDO (a required 8-carbon sugar) for incorporation into bacterial lipopolysaccharide in Gram-negative bacteria. The sequence is that of 3-deoxy-manno-octulosonate cytidylyltransferase from Geobacter metallireducens (strain ATCC 53774 / DSM 7210 / GS-15).